We begin with the raw amino-acid sequence, 515 residues long: Protein disulfide-isomerase (515 aa).

The first 20 residues, 1–20, serve as a signal peptide directing secretion; sequence MRTFAPWILSLLGASAVASA. Thioredoxin domains follow at residues 21 to 136 and 343 to 470; these read ADAT…QSLP and VLDD…ENGK. Residues Cys-58, Cys-61, Cys-393, and Cys-396 each act as nucleophile in the active site. 2 disulfide bridges follow: Cys-58-Cys-61 and Cys-393-Cys-396. 2 stretches are compositionally biased toward basic and acidic residues: residues 472 to 496 and 506 to 515; these read KVDA…RAAS and SDDKSEHDEL. Residues 472 to 515 are disordered; that stretch reads KVDALEVDPKKEQESGDATETRAASDETETPAATSDDKSEHDEL. The short motif at 512 to 515 is the Prevents secretion from ER element; the sequence is HDEL.

The protein belongs to the protein disulfide isomerase family.

It is found in the endoplasmic reticulum lumen. The catalysed reaction is Catalyzes the rearrangement of -S-S- bonds in proteins.. Functionally, participates in the folding of proteins containing disulfide bonds, may be involved in glycosylation, prolyl hydroxylation and triglyceride transfer. The sequence is that of Protein disulfide-isomerase (pdiA) from Aspergillus oryzae (strain ATCC 42149 / RIB 40) (Yellow koji mold).